Reading from the N-terminus, the 210-residue chain is UPF0301 protein Mnod_6933 (210 aa).

The protein belongs to the UPF0301 (AlgH) family.

The chain is UPF0301 protein Mnod_6933 from Methylobacterium nodulans (strain LMG 21967 / CNCM I-2342 / ORS 2060).